We begin with the raw amino-acid sequence, 124 residues long: Fluoride-specific ion channel FluC (124 aa).

Helical transmembrane passes span 4-24, 35-55, 60-80, and 95-115; these read VLLV…ISIF, FGTL…YALG, ISPE…TTFS, and WLKA…MVYL. Na(+) contacts are provided by Gly-74 and Thr-77.

Belongs to the fluoride channel Fluc/FEX (TC 1.A.43) family.

The protein localises to the cell inner membrane. The catalysed reaction is fluoride(in) = fluoride(out). Its activity is regulated as follows. Na(+) is not transported, but it plays an essential structural role and its presence is essential for fluoride channel function. Its function is as follows. Fluoride-specific ion channel. Important for reducing fluoride concentration in the cell, thus reducing its toxicity. This is Fluoride-specific ion channel FluC from Shewanella putrefaciens (strain CN-32 / ATCC BAA-453).